A 285-amino-acid polypeptide reads, in one-letter code: tRNA uridine(34) hydroxylase (285 aa).

The Rhodanese domain maps to 130–225; the sequence is RGDDVVFFDG…YGEAFGDTGL (96 aa). C185 acts as the Cysteine persulfide intermediate in catalysis.

This sequence belongs to the TrhO family.

The enzyme catalyses uridine(34) in tRNA + AH2 + O2 = 5-hydroxyuridine(34) in tRNA + A + H2O. Its function is as follows. Catalyzes oxygen-dependent 5-hydroxyuridine (ho5U) modification at position 34 in tRNAs. This Rhodococcus opacus (strain B4) protein is tRNA uridine(34) hydroxylase.